A 210-amino-acid chain; its full sequence is MASLLIIVFLSHVVTYLINTIGATTVDNLLWLLYLKLPNNTSRTAVEQRRLKGEVVQLKREMKSTSSQDEFAKWAKLRRRHDKAMEEYEAKNKALGKHKGSFDLTVKSVRFFSTTGLKFFLQFWYSKTPMFELPRGWVPWQVEWVLSFPRAPLGTVSIQVWSGVCTTVVSLAGDALGVVIQSLILKMTKRGVARTSEGRPSQPMALKKEL.

At 1–4 the chain is on the lumenal side; that stretch reads MASL. Residues 5 to 24 form a helical membrane-spanning segment; that stretch reads LIIVFLSHVVTYLINTIGAT. The Cytoplasmic portion of the chain corresponds to 25–110; the sequence is TVDNLLWLLY…SFDLTVKSVR (86 aa). The stretch at 43–97 forms a coiled coil; sequence RTAVEQRRLKGEVVQLKREMKSTSSQDEFAKWAKLRRRHDKAMEEYEAKNKALGK. The helical transmembrane segment at 111 to 131 threads the bilayer; that stretch reads FFSTTGLKFFLQFWYSKTPMF. The Lumenal segment spans residues 132–155; it reads ELPRGWVPWQVEWVLSFPRAPLGT. The chain crosses the membrane as a helical span at residues 156–172; the sequence is VSIQVWSGVCTTVVSLA. The Cytoplasmic portion of the chain corresponds to 173-210; that stretch reads GDALGVVIQSLILKMTKRGVARTSEGRPSQPMALKKEL.

Belongs to the WRB/GET1 family. In terms of assembly, interacts with GET3.

The protein resides in the endoplasmic reticulum membrane. Required for the post-translational delivery of tail-anchored (TA) proteins to the endoplasmic reticulum. Acts as a membrane receptor for soluble GET3, which recognizes and selectively binds the transmembrane domain of TA proteins in the cytosol. This Uncinocarpus reesii (strain UAMH 1704) protein is Protein GET1.